The chain runs to 360 residues: A-type ATP synthase subunit C (360 aa).

It belongs to the V-ATPase V0D/AC39 subunit family. Has multiple subunits, A(3), B(3), C, D, E, F, G, I and K(x); there may be a few other subunits as well.

It localises to the cell membrane. Functionally, component of the A-type ATP synthase that produces ATP from ADP in the presence of a proton gradient across the membrane. This is A-type ATP synthase subunit C from Methanosarcina mazei (strain ATCC BAA-159 / DSM 3647 / Goe1 / Go1 / JCM 11833 / OCM 88) (Methanosarcina frisia).